The sequence spans 1205 residues: cGMP-specific 3',5'-cyclic phosphodiesterase (1205 aa).

Residues 1 to 153 (MTDVSSPAGG…TKASTTASQQ (153 aa)) are disordered. The span at 18–32 (TTSSSPAATTSASSS) shows a compositional bias: low complexity. Positions 33–48 (KPLTNGANKTTISTTA) are enriched in polar residues. The segment covering 62–71 (GAIPASSSSG) has biased composition (low complexity). Over residues 83 to 94 (SNNNRPAATNRS) the composition is skewed to polar residues. The span at 118 to 140 (SSSSPSQSPSQTQASIQTQTSQQ) shows a compositional bias: low complexity. GAF domains follow at residues 259 to 411 (DIDV…GIGI) and 443 to 624 (NLEC…GLGI). Residues 654-1052 (SQDQTEKLTQ…RNWQDLAEKV (399 aa)) form the PDEase domain. His730 serves as the catalytic Proton donor. His734, His770, Asp771, and Asp956 together coordinate a divalent metal cation. 2 disordered regions span residues 1093–1122 (QQSQ…TGAL) and 1152–1205 (SHVS…CALL). 2 stretches are compositionally biased toward basic and acidic residues: residues 1098–1109 (GSEDSHTPEHQR) and 1152–1162 (SHVSEDMDDKS). The span at 1171–1191 (ASGSMGRMSASSSTSSAGGQM) shows a compositional bias: low complexity. A compositionally biased stretch (basic residues) spans 1195-1205 (SKKRSKLCALL). At Cys1202 the chain carries Cysteine methyl ester. Cys1202 carries S-farnesyl cysteine lipidation. The propeptide at 1203–1205 (ALL) is removed in mature form.

Belongs to the cyclic nucleotide phosphodiesterase family. In terms of assembly, interacts with PrBP. Requires a divalent metal cation as cofactor.

It is found in the cell membrane. It carries out the reaction 3',5'-cyclic GMP + H2O = GMP + H(+). Its function is as follows. Has a role regulating cGMP transport in Malpighian tubule principal cells. The sequence is that of cGMP-specific 3',5'-cyclic phosphodiesterase from Drosophila sechellia (Fruit fly).